Reading from the N-terminus, the 432-residue chain is Trigger factor (432 aa).

One can recognise a PPIase FKBP-type domain in the interval 161-246; sequence DDRVTIDFVG…LKKIENMVLP (86 aa).

This sequence belongs to the FKBP-type PPIase family. Tig subfamily.

Its subcellular location is the cytoplasm. The catalysed reaction is [protein]-peptidylproline (omega=180) = [protein]-peptidylproline (omega=0). Functionally, involved in protein export. Acts as a chaperone by maintaining the newly synthesized protein in an open conformation. Functions as a peptidyl-prolyl cis-trans isomerase. The sequence is that of Trigger factor from Haemophilus influenzae (strain PittEE).